Here is a 204-residue protein sequence, read N- to C-terminus: Large ribosomal subunit protein uL4 (204 aa).

A disordered region spans residues 49-75; the sequence is TKGRSDVSGGGKKPWRQKGRGGARAGS.

The protein belongs to the universal ribosomal protein uL4 family. In terms of assembly, part of the 50S ribosomal subunit.

In terms of biological role, one of the primary rRNA binding proteins, this protein initially binds near the 5'-end of the 23S rRNA. It is important during the early stages of 50S assembly. It makes multiple contacts with different domains of the 23S rRNA in the assembled 50S subunit and ribosome. Functionally, forms part of the polypeptide exit tunnel. The chain is Large ribosomal subunit protein uL4 from Campylobacter jejuni subsp. doylei (strain ATCC BAA-1458 / RM4099 / 269.97).